Consider the following 78-residue polypeptide: NAD(P)H-quinone oxidoreductase subunit O (78 aa).

This sequence belongs to the complex I NdhO subunit family. As to quaternary structure, NDH-1 can be composed of about 15 different subunits; different subcomplexes with different compositions have been identified which probably have different functions.

The protein localises to the cellular thylakoid membrane. It catalyses the reaction a plastoquinone + NADH + (n+1) H(+)(in) = a plastoquinol + NAD(+) + n H(+)(out). The enzyme catalyses a plastoquinone + NADPH + (n+1) H(+)(in) = a plastoquinol + NADP(+) + n H(+)(out). In terms of biological role, NDH-1 shuttles electrons from an unknown electron donor, via FMN and iron-sulfur (Fe-S) centers, to quinones in the respiratory and/or the photosynthetic chain. The immediate electron acceptor for the enzyme in this species is believed to be plastoquinone. Couples the redox reaction to proton translocation, and thus conserves the redox energy in a proton gradient. Cyanobacterial NDH-1 also plays a role in inorganic carbon-concentration. In Prochlorococcus marinus (strain AS9601), this protein is NAD(P)H-quinone oxidoreductase subunit O.